Here is a 172-residue protein sequence, read N- to C-terminus: Shikimate kinase (172 aa).

Residue glycine 11–threonine 16 participates in ATP binding. Threonine 15 provides a ligand contact to Mg(2+). Residues aspartate 33, arginine 57, and glycine 79 each contribute to the substrate site. Residue arginine 117 coordinates ATP. Arginine 136 serves as a coordination point for substrate.

It belongs to the shikimate kinase family. As to quaternary structure, monomer. Mg(2+) serves as cofactor.

Its subcellular location is the cytoplasm. The catalysed reaction is shikimate + ATP = 3-phosphoshikimate + ADP + H(+). It functions in the pathway metabolic intermediate biosynthesis; chorismate biosynthesis; chorismate from D-erythrose 4-phosphate and phosphoenolpyruvate: step 5/7. Catalyzes the specific phosphorylation of the 3-hydroxyl group of shikimic acid using ATP as a cosubstrate. The protein is Shikimate kinase of Caldicellulosiruptor bescii (strain ATCC BAA-1888 / DSM 6725 / KCTC 15123 / Z-1320) (Anaerocellum thermophilum).